The sequence spans 861 residues: Probable beta-glucosidase A (861 aa).

The signal sequence occupies residues 1–19 (MKLSILEAAALTAASVVSA). N-linked (GlcNAc...) asparagine glycosylation is found at Asn62, Asn212, and Asn253. The active site involves Asp281. 8 N-linked (GlcNAc...) asparagine glycosylation sites follow: Asn316, Asn323, Asn355, Asn524, Asn543, Asn565, Asn669, and Asn713. The tract at residues 735–754 (PEGATDGSPQPRLPASGGPG) is disordered.

It belongs to the glycosyl hydrolase 3 family.

The protein resides in the secreted. The enzyme catalyses Hydrolysis of terminal, non-reducing beta-D-glucosyl residues with release of beta-D-glucose.. Its pathway is glycan metabolism; cellulose degradation. Functionally, beta-glucosidases are one of a number of cellulolytic enzymes involved in the degradation of cellulosic biomass. Catalyzes the last step releasing glucose from the inhibitory cellobiose. The sequence is that of Probable beta-glucosidase A (bglA) from Aspergillus terreus (strain NIH 2624 / FGSC A1156).